The following is a 957-amino-acid chain: Protein CRT10 (957 aa).

The segment at 695–719 (NSTEEDDVNSDPENEESGSSLTSFQ) is disordered. Residues 697 to 710 (TEEDDVNSDPENEE) are compositionally biased toward acidic residues. Serine 704 bears the Phosphoserine mark.

Component of a cullin-RING ligase (CRL) composed of 4 subunits: the RING protein HRT1, the cullin RTT101, a linker protein MMS1, and the substrate receptor CRT10. Interacts with MMS1.

In terms of biological role, substrate targeting component of a cullin-RING-based E3 ubiquitin-protein ligase complex RTT101(MMS1-CRT10). RTT101(MMS1-CRT10) may regulate nucleotide synthesis through transcriptional regulation of RNR genes encoding ribonucleotide reductases. This is Protein CRT10 (CRT10) from Saccharomyces cerevisiae (strain ATCC 204508 / S288c) (Baker's yeast).